A 357-amino-acid chain; its full sequence is UDP-N-acetylglucosamine--N-acetylmuramyl-(pentapeptide) pyrophosphoryl-undecaprenol N-acetylglucosamine transferase (357 aa).

Residues 13-15 (TGG), Asn-125, Arg-161, Ser-189, Ile-243, and Gln-288 each bind UDP-N-acetyl-alpha-D-glucosamine.

Belongs to the glycosyltransferase 28 family. MurG subfamily.

The protein resides in the cell inner membrane. The catalysed reaction is di-trans,octa-cis-undecaprenyl diphospho-N-acetyl-alpha-D-muramoyl-L-alanyl-D-glutamyl-meso-2,6-diaminopimeloyl-D-alanyl-D-alanine + UDP-N-acetyl-alpha-D-glucosamine = di-trans,octa-cis-undecaprenyl diphospho-[N-acetyl-alpha-D-glucosaminyl-(1-&gt;4)]-N-acetyl-alpha-D-muramoyl-L-alanyl-D-glutamyl-meso-2,6-diaminopimeloyl-D-alanyl-D-alanine + UDP + H(+). It participates in cell wall biogenesis; peptidoglycan biosynthesis. In terms of biological role, cell wall formation. Catalyzes the transfer of a GlcNAc subunit on undecaprenyl-pyrophosphoryl-MurNAc-pentapeptide (lipid intermediate I) to form undecaprenyl-pyrophosphoryl-MurNAc-(pentapeptide)GlcNAc (lipid intermediate II). This is UDP-N-acetylglucosamine--N-acetylmuramyl-(pentapeptide) pyrophosphoryl-undecaprenol N-acetylglucosamine transferase from Bordetella petrii (strain ATCC BAA-461 / DSM 12804 / CCUG 43448).